We begin with the raw amino-acid sequence, 112 residues long: ATP synthase subunit c (112 aa).

Helical transmembrane passes span 36 to 56 and 81 to 101; these read FSVLAAGLGLGVAALGGAIGM and MFIALAMIEAQVIYALVIALI.

The protein belongs to the ATPase C chain family. F-type ATPases have 2 components, F(1) - the catalytic core - and F(0) - the membrane proton channel. F(1) has five subunits: alpha(3), beta(3), gamma(1), delta(1), epsilon(1). F(0) has three main subunits: a(1), b(2) and c(10-14). The alpha and beta chains form an alternating ring which encloses part of the gamma chain. F(1) is attached to F(0) by a central stalk formed by the gamma and epsilon chains, while a peripheral stalk is formed by the delta and b chains.

It localises to the cell inner membrane. Functionally, f(1)F(0) ATP synthase produces ATP from ADP in the presence of a proton or sodium gradient. F-type ATPases consist of two structural domains, F(1) containing the extramembraneous catalytic core and F(0) containing the membrane proton channel, linked together by a central stalk and a peripheral stalk. During catalysis, ATP synthesis in the catalytic domain of F(1) is coupled via a rotary mechanism of the central stalk subunits to proton translocation. The polypeptide is ATP synthase subunit c (Campylobacter jejuni subsp. jejuni serotype O:2 (strain ATCC 700819 / NCTC 11168)).